A 2498-amino-acid chain; its full sequence is PKS-NRPS hybrid synthetase acdB (2498 aa).

The adenylation (A) domain stretch occupies residues 34–427 (FEQAAHAHFD…GRADSQVKIR (394 aa)). The Carrier 1 domain occupies 531-606 (QPATELERDI…SLAGYLMDMD (76 aa)). S566 carries the post-translational modification O-(pantetheine 4'-phosphoryl)serine. Positions 627 to 1058 (SDDIAVVSMA…GTNAHVIVEE (432 aa)) constitute a Ketosynthase family 3 (KS3) domain. Catalysis depends on for beta-ketoacyl synthase activity residues C802, H938, and H979. Residues 1165–1485 (LFAGQGSQQL…EILARLHVQH (321 aa)) are malonyl-CoA:ACP transacylase (MAT) domain. The ketoreductase (KR) domain stretch occupies residues 1739–1917 (GAVLITGGLS…PAVCVAYGPL (179 aa)). The region spanning 2017–2092 (EILLRTIQEA…ELSRYLLPQL (76 aa)) is the Carrier 2 domain. S2052 is modified (O-(pantetheine 4'-phosphoryl)serine). The interval 2149–2378 (VTGATEFVGA…FPVDYVCRTI (230 aa)) is thioester reductase (TE) domain.

It in the C-terminal section; belongs to the NRP synthetase family. Pantetheine 4'-phosphate serves as cofactor.

It participates in secondary metabolite biosynthesis. Its function is as follows. PKS-NRPS hybrid synthetase; part of the gene cluster that mediates the biosynthesis of aspcandine, a pyrrolobenzazepine alkaloid. Initially, the indoleamine 2,3-dioxygenase acdA accepts L-tryptophan and performs the oxidative opening of the indole ring to yield N'-formyl-L-kynurenine, which undergoes the spontaneous deformylation reaction to provide L-kynurenine. The kynurenine 3-monooxygenase acdD then hydroxylates L-kynurenine to afford 3-hydroxy-L-kynurenine. 3-hydroxy-L-kynurenine is activated by the A domain of the NRPS-PKS acdB and subsequently loaded onto the enzyme. The KS domain conducts the decarboxylative condensation of the 3-hydroxy-L-kynurenyl and malonyl moieties, and subsequent nucleophilic attacks by the two amino groups would occur nonenzymatically at two distinct positions, achieving the chain release and the construction of the tricyclic system. Finally, a dehydration reaction completes the biosynthesis to yield aspcandine. The polypeptide is PKS-NRPS hybrid synthetase acdB (Aspergillus candidus).